The sequence spans 170 residues: Small ribosomal subunit protein mS25 (170 aa).

The protein belongs to the mitochondrion-specific ribosomal protein mS25 family. As to quaternary structure, component of the mitochondrial ribosome small subunit (28S) which comprises a 12S rRNA and about 30 distinct proteins.

The protein resides in the mitochondrion. The chain is Small ribosomal subunit protein mS25 (mrps-25) from Caenorhabditis elegans.